The following is a 931-amino-acid chain: Phosphoenolpyruvate carboxylase (931 aa).

Catalysis depends on residues H138 and K594.

The protein belongs to the PEPCase type 1 family. It depends on Mg(2+) as a cofactor.

The catalysed reaction is oxaloacetate + phosphate = phosphoenolpyruvate + hydrogencarbonate. In terms of biological role, forms oxaloacetate, a four-carbon dicarboxylic acid source for the tricarboxylic acid cycle. The protein is Phosphoenolpyruvate carboxylase of Streptococcus agalactiae serotype Ia (strain ATCC 27591 / A909 / CDC SS700).